Reading from the N-terminus, the 94-residue chain is Small ribosomal subunit protein uS19 (94 aa).

Belongs to the universal ribosomal protein uS19 family.

Functionally, protein S19 forms a complex with S13 that binds strongly to the 16S ribosomal RNA. This chain is Small ribosomal subunit protein uS19, found in Desulforudis audaxviator (strain MP104C).